A 594-amino-acid chain; its full sequence is Golgi-associated RAB2 interactor protein 4 (594 aa).

The disordered stretch occupies residues 390 to 525 (AAGLPVSTRQ…SSGSSKRLGR (136 aa)). Polar residues predominate over residues 396–406 (STRQSKSSLSG). 3 stretches are compositionally biased toward basic and acidic residues: residues 408-433 (HGRE…DKAL), 442-455 (TGES…DKIA), and 468-477 (ASRDGKKEKG). Low complexity predominate over residues 510–521 (RSSSTTSSGSSK).

The protein belongs to the GARIN family. As to quaternary structure, interacts (via N-terminus) with RAB2B (in GTP-bound form).

The protein localises to the golgi apparatus. Functionally, RAB2B effector protein required for the compacted Golgi morphology, probably through interaction with small GTPase RAB2B. This chain is Golgi-associated RAB2 interactor protein 4 (GARIN4), found in Macaca fascicularis (Crab-eating macaque).